A 337-amino-acid polypeptide reads, in one-letter code: Glyceraldehyde-3-phosphate dehydrogenase 3 (337 aa).

NAD(+)-binding positions include 12–13 and K80; that span reads RM. D-glyceraldehyde 3-phosphate contacts are provided by residues 152–154 and T183; that span reads SCT. The active-site Nucleophile is C153. N184 is an NAD(+) binding site. Residues R198, 211–212, and R234 contribute to the D-glyceraldehyde 3-phosphate site; that span reads TG. N317 lines the NAD(+) pocket.

The protein belongs to the glyceraldehyde-3-phosphate dehydrogenase family. Homotetramer.

The protein resides in the cytoplasm. It catalyses the reaction D-glyceraldehyde 3-phosphate + phosphate + NAD(+) = (2R)-3-phospho-glyceroyl phosphate + NADH + H(+). It functions in the pathway carbohydrate degradation; glycolysis; pyruvate from D-glyceraldehyde 3-phosphate: step 1/5. Its pathway is carbohydrate biosynthesis; gluconeogenesis. Its function is as follows. Catalyzes the oxidative phosphorylation of glyceraldehyde 3-phosphate (G3P) to 1,3-bisphosphoglycerate (BPG) using the cofactor NAD. The first reaction step involves the formation of a hemiacetal intermediate between G3P and a cysteine residue, and this hemiacetal intermediate is then oxidized to a thioester, with concomitant reduction of NAD to NADH. The reduced NADH is then exchanged with the second NAD, and the thioester is attacked by a nucleophilic inorganic phosphate to produce BPG. This chain is Glyceraldehyde-3-phosphate dehydrogenase 3 (gap3), found in Nostoc sp. (strain PCC 7120 / SAG 25.82 / UTEX 2576).